A 1233-amino-acid polypeptide reads, in one-letter code: Pesticidal crystal protein Cry1Bc (1233 aa).

It belongs to the delta endotoxin family.

Functionally, promotes colloidosmotic lysis by binding to the midgut epithelial cells of insects. The polypeptide is Pesticidal crystal protein Cry1Bc (cry1Bc) (Bacillus thuringiensis subsp. morrisoni).